The sequence spans 197 residues: Viral polyamine acetyltransferase (197 aa).

N22 is a binding site for acetyl-CoA. The active site involves E27. The N-acetyltransferase domain occupies 102-182 (SYTPDDKCLY…YQYGITKPFD (81 aa)). Acetyl-CoA-binding residues include I115, S117, G121, G123, A125, T126, T149, N150, and K159.

The protein belongs to the acetyltransferase family.

The catalysed reaction is spermine + acetyl-CoA = N(1)-acetylspermine + CoA + H(+). It catalyses the reaction spermidine + acetyl-CoA = N(1)-acetylspermidine + CoA + H(+). It carries out the reaction spermidine + acetyl-CoA = N(8)-acetylspermidine + CoA + H(+). The enzyme catalyses putrescine + acetyl-CoA = N-acetylputrescine + CoA + H(+). The catalysed reaction is cadaverine + acetyl-CoA = N-acetylcadaverine + CoA + H(+). It catalyses the reaction sym-homospermidine + acetyl-CoA = N(1)-acetyl-sym-homospermidine + CoA + H(+). Functionally, acetylates polyamines such as spermine, spermidine, cadaverine, homospermidine and putrescine (the latter with low efficiency). May play a role in the regulation of polyamine catabolism in the host during viral replication. The polypeptide is Viral polyamine acetyltransferase (Chlorella (PBCV-1)).